Here is a 273-residue protein sequence, read N- to C-terminus: 5-deoxy-glucuronate isomerase (273 aa).

The protein belongs to the isomerase IolB family.

It catalyses the reaction 5-deoxy-D-glucuronate = 5-dehydro-2-deoxy-D-gluconate. It participates in polyol metabolism; myo-inositol degradation into acetyl-CoA; acetyl-CoA from myo-inositol: step 4/7. Involved in the isomerization of 5-deoxy-glucuronate (5DG) to 5-dehydro-2-deoxy-D-gluconate (DKG or 2-deoxy-5-keto-D-gluconate). This is 5-deoxy-glucuronate isomerase from Listeria monocytogenes serotype 4b (strain CLIP80459).